A 210-amino-acid chain; its full sequence is 7-carboxy-7-deazaguanine synthase (210 aa).

Residues 12–14 and R27 contribute to the substrate site; that span reads LQG. Positions 18–210 constitute a Radical SAM core domain; it reads HAGRASVFCR…VQTHKSLGIR (193 aa). The [4Fe-4S] cluster site is built by C31, C46, and C49. Residue T51 coordinates Mg(2+). Residue T90 participates in substrate binding. Residues G92, 133 to 135, and 173 to 176 contribute to the S-adenosyl-L-methionine site; these read SPK and QPMD.

This sequence belongs to the radical SAM superfamily. 7-carboxy-7-deazaguanine synthase family. As to quaternary structure, homodimer. It depends on [4Fe-4S] cluster as a cofactor. Requires S-adenosyl-L-methionine as cofactor. The cofactor is Mg(2+).

It carries out the reaction 6-carboxy-5,6,7,8-tetrahydropterin + H(+) = 7-carboxy-7-deazaguanine + NH4(+). It participates in purine metabolism; 7-cyano-7-deazaguanine biosynthesis. Catalyzes the complex heterocyclic radical-mediated conversion of 6-carboxy-5,6,7,8-tetrahydropterin (CPH4) to 7-carboxy-7-deazaguanine (CDG), a step common to the biosynthetic pathways of all 7-deazapurine-containing compounds. In Bradyrhizobium diazoefficiens (strain JCM 10833 / BCRC 13528 / IAM 13628 / NBRC 14792 / USDA 110), this protein is 7-carboxy-7-deazaguanine synthase.